The sequence spans 480 residues: Coronin-2B (480 aa).

WD repeat units lie at residues 85-125 (GHQG…LKRN), 135-177 (GHSR…KMID), 179-217 (HRDV…VLQE), 220-263 (CKTH…MPVT), and 265-308 (EEID…PYLT). The stretch at 436-475 (NELLRMFFRQQEEIRRLKEQLSQRDLLVRQLELELKNLRN) forms a coiled coil.

It belongs to the WD repeat coronin family.

The protein localises to the cytoplasm. The protein resides in the cytoskeleton. May play a role in the reorganization of neuronal actin structure. In Xenopus tropicalis (Western clawed frog), this protein is Coronin-2B (coro2b).